The sequence spans 238 residues: Succinate dehydrogenase assembly factor 2, mitochondrial (238 aa).

The interval 47 to 82 (GLKADGSRADQAEAGASQSLDKQSRTLDSVRDDTLS) is disordered. Positions 68–80 (KQSRTLDSVRDDT) are enriched in basic and acidic residues.

Belongs to the SDHAF2 family. As to quaternary structure, interacts with the flavoprotein subunit within the SDH catalytic dimer.

Its subcellular location is the mitochondrion matrix. Its function is as follows. Plays an essential role in the assembly of succinate dehydrogenase (SDH), an enzyme complex (also referred to as respiratory complex II) that is a component of both the tricarboxylic acid (TCA) cycle and the mitochondrial electron transport chain, and which couples the oxidation of succinate to fumarate with the reduction of ubiquinone (coenzyme Q) to ubiquinol. Required for flavinylation (covalent attachment of FAD) of the flavoprotein subunit of the SDH catalytic dimer. The sequence is that of Succinate dehydrogenase assembly factor 2, mitochondrial from Mycosarcoma maydis (Corn smut fungus).